The following is a 332-amino-acid chain: dTDP-3,4-didehydro-2,6-dideoxy-alpha-D-glucose 3-reductase (332 aa).

12–18 serves as a coordination point for NADP(+); that stretch reads CASFAWR. Arg19 lines the substrate pocket. Residues 37–38, Tyr58, Leu74, and His79 contribute to the NADP(+) site; that span reads SR. Lys97 functions as the Proton donor in the catalytic mechanism. NADP(+) is bound by residues Arg165 and Asp177. Substrate is bound by residues Tyr235 and Thr255.

It belongs to the Gfo/Idh/MocA family. Monomer.

It catalyses the reaction dTDP-4-dehydro-2,6-dideoxy-alpha-D-glucose + NADP(+) = dTDP-3,4-didehydro-2,6-dideoxy-alpha-D-glucose + NADPH + H(+). In terms of biological role, involved in the biosynthesis of forosamine ((4-dimethylamino)-2,3,4,6-tetradeoxy-alpha-D-threo-hexopyranose), a highly deoxygenated sugar component of several bioactive natural products such as the insecticidal spinosyns A and D. Catalyzes the reduction of the C-3 keto moiety of dTDP-3,4-diketo-2,6-dideoxy-alpha-D-glucose to yield dTDP-4-keto-2,6-dideoxy-alpha-D-glucose. NADPH is the better reductant, however NADH can also be used. The protein is dTDP-3,4-didehydro-2,6-dideoxy-alpha-D-glucose 3-reductase of Saccharopolyspora spinosa.